The primary structure comprises 145 residues: Ribosome-binding factor A (145 aa).

Positions 1 to 10 (MKRPSSHGRR) are enriched in basic residues. 2 disordered regions span residues 1 to 21 (MKRPSSHGRRPPQGPSQRQLR) and 124 to 145 (DDPKVRQDLTPQPPSDSWKDED).

It belongs to the RbfA family. Monomer. Binds 30S ribosomal subunits, but not 50S ribosomal subunits or 70S ribosomes.

The protein resides in the cytoplasm. Its function is as follows. One of several proteins that assist in the late maturation steps of the functional core of the 30S ribosomal subunit. Associates with free 30S ribosomal subunits (but not with 30S subunits that are part of 70S ribosomes or polysomes). Required for efficient processing of 16S rRNA. May interact with the 5'-terminal helix region of 16S rRNA. This chain is Ribosome-binding factor A, found in Phenylobacterium zucineum (strain HLK1).